The sequence spans 387 residues: Succinyl-diaminopimelate desuccinylase (387 aa).

Residue His-74 participates in Zn(2+) binding. Residue Asp-76 is part of the active site. Residue Asp-107 participates in Zn(2+) binding. Catalysis depends on Glu-142, which acts as the Proton acceptor. Residues Glu-143, Glu-171, and His-360 each contribute to the Zn(2+) site.

This sequence belongs to the peptidase M20A family. DapE subfamily. As to quaternary structure, homodimer. Zn(2+) is required as a cofactor. Requires Co(2+) as cofactor.

It catalyses the reaction N-succinyl-(2S,6S)-2,6-diaminopimelate + H2O = (2S,6S)-2,6-diaminopimelate + succinate. It participates in amino-acid biosynthesis; L-lysine biosynthesis via DAP pathway; LL-2,6-diaminopimelate from (S)-tetrahydrodipicolinate (succinylase route): step 3/3. Catalyzes the hydrolysis of N-succinyl-L,L-diaminopimelic acid (SDAP), forming succinate and LL-2,6-diaminopimelate (DAP), an intermediate involved in the bacterial biosynthesis of lysine and meso-diaminopimelic acid, an essential component of bacterial cell walls. The protein is Succinyl-diaminopimelate desuccinylase of Rhodopseudomonas palustris (strain ATCC BAA-98 / CGA009).